The primary structure comprises 434 residues: Polyadenylate-binding protein RBP47C' (434 aa).

Residues 1-50 (MADVKVQSESESSDSHPLVDYQSLPPYPPPHPPVEVEENQPKTSPTPPPP) are disordered. RRM domains lie at 103–185 (KTIW…WASF), 199–278 (LSIF…PATP), and 306–378 (TTIF…WGRN).

Belongs to the polyadenylate-binding RBP47 family. As to quaternary structure, interacts with the poly(A) tail of mRNA in nucleus.

It localises to the nucleus. Its subcellular location is the cytoplasmic granule. Functionally, heterogeneous nuclear ribonucleoprotein (hnRNP)-protein binding the poly(A) tail of mRNA and probably involved in some steps of pre-mRNA maturation. The protein is Polyadenylate-binding protein RBP47C' (RBP47C') of Arabidopsis thaliana (Mouse-ear cress).